The chain runs to 418 residues: Serine hydroxymethyltransferase (418 aa).

(6S)-5,6,7,8-tetrahydrofolate contacts are provided by residues Leu-121 and 125–127 (GHL). Lys-230 carries the N6-(pyridoxal phosphate)lysine modification. (6S)-5,6,7,8-tetrahydrofolate contacts are provided by residues Glu-246 and 355-357 (SPF).

This sequence belongs to the SHMT family. Homodimer. Pyridoxal 5'-phosphate is required as a cofactor.

It is found in the cytoplasm. The catalysed reaction is (6R)-5,10-methylene-5,6,7,8-tetrahydrofolate + glycine + H2O = (6S)-5,6,7,8-tetrahydrofolate + L-serine. It participates in one-carbon metabolism; tetrahydrofolate interconversion. The protein operates within amino-acid biosynthesis; glycine biosynthesis; glycine from L-serine: step 1/1. Catalyzes the reversible interconversion of serine and glycine with tetrahydrofolate (THF) serving as the one-carbon carrier. This reaction serves as the major source of one-carbon groups required for the biosynthesis of purines, thymidylate, methionine, and other important biomolecules. Also exhibits THF-independent aldolase activity toward beta-hydroxyamino acids, producing glycine and aldehydes, via a retro-aldol mechanism. The protein is Serine hydroxymethyltransferase of Streptococcus pneumoniae serotype 19F (strain G54).